A 581-amino-acid polypeptide reads, in one-letter code: Lipoprotein LpqB (581 aa).

A signal peptide spans 1–23; it reads MRNHVSRYLTALIAVGCAATTAA. Cys-24 carries N-palmitoyl cysteine lipidation. Cys-24 carries the S-diacylglycerol cysteine lipid modification.

The protein belongs to the LpqB lipoprotein family.

Its subcellular location is the cell membrane. This Corynebacterium diphtheriae (strain ATCC 700971 / NCTC 13129 / Biotype gravis) protein is Lipoprotein LpqB.